The primary structure comprises 202 residues: UPF0126 membrane protein YvgT (202 aa).

Helical transmembrane passes span tryptophan 3–methionine 23, glutamate 26–isoleucine 46, alanine 63–leucine 83, glycine 90–valine 110, glycine 113–isoleucine 133, and isoleucine 160–valine 180.

The protein belongs to the UPF0126 family.

The protein resides in the cell membrane. This Bacillus subtilis (strain 168) protein is UPF0126 membrane protein YvgT (yvgT).